The chain runs to 223 residues: Translation initiation factor 6 (223 aa).

Belongs to the eIF-6 family. Associates with the 50S ribosomal subunit, specifically with protein L14. Binds to 23S rRNA, possibly between where the 30S and 50S subunits associate to initiate translation. Post-translationally, modified in an unknown fashion (not phosphorylation) following release from 50S ribosomal subunits.

Its function is as follows. Binds to the 50S ribosomal subunit and prevents its association with the 30S ribosomal subunit to form the 70S initiation complex. Inhibits translation of both leadered and leaderless mRNAs, maybe by binding to the 50S ribosome subunit, preventing it from binding to the 30S subunit. The chain is Translation initiation factor 6 from Saccharolobus solfataricus (strain ATCC 35092 / DSM 1617 / JCM 11322 / P2) (Sulfolobus solfataricus).